The following is an 812-amino-acid chain: Xaa-Pro dipeptidyl-peptidase (812 aa).

Active-site charge relay system residues include serine 372, aspartate 492, and histidine 523.

It belongs to the peptidase S15 family. As to quaternary structure, homodimer.

The protein resides in the cytoplasm. The enzyme catalyses Hydrolyzes Xaa-Pro-|- bonds to release unblocked, N-terminal dipeptides from substrates including Ala-Pro-|-p-nitroanilide and (sequentially) Tyr-Pro-|-Phe-Pro-|-Gly-Pro-|-Ile.. Removes N-terminal dipeptides sequentially from polypeptides having unsubstituted N-termini provided that the penultimate residue is proline. This is Xaa-Pro dipeptidyl-peptidase from Pediococcus pentosaceus (strain ATCC 25745 / CCUG 21536 / LMG 10740 / 183-1w).